The sequence spans 617 residues: Protein fem-1 homolog C (617 aa).

M1 carries the N-acetylmethionine modification. 7 ANK repeats span residues 2 to 31 (DLKT…KAEV), 40 to 70 (NGAT…SIEV), 82 to 111 (EGAP…SVNN), 115 to 144 (TNST…DLEV), 148 to 177 (HGHT…DVNR), 181 to 210 (KGNT…KMEK), and 213 to 242 (YGMT…TSKT). TPR repeat units lie at residues 245 to 279 (INAL…RYSD) and 338 to 371 (SYYI…QQSN). 2 ANK repeats span residues 481–523 (NNFS…DVNV) and 527–556 (DDNS…HFDA).

It belongs to the fem-1 family. Component of a Cul2-RING (CRL2) E3 ubiquitin-protein ligase complex, also named ECS (Elongin BC-CUL2/5-SOCS-box protein) complex, composed of CUL2, Elongin BC (ELOB and ELOC), RBX1 and substrate-specific adapter FEM1C. Widely expressed. Expressed at higher level in testis.

The protein operates within protein modification; protein ubiquitination. Functionally, substrate-recognition component of a Cul2-RING (CRL2) E3 ubiquitin-protein ligase complex of the DesCEND (destruction via C-end degrons) pathway, which recognizes a C-degron located at the extreme C terminus of target proteins, leading to their ubiquitination and degradation. The C-degron recognized by the DesCEND pathway is usually a motif of less than ten residues and can be present in full-length proteins, truncated proteins or proteolytically cleaved forms. The CRL2(FEM1C) complex specifically recognizes proteins with an arginine at the C-terminus: recognizes and binds proteins ending with -Lys/Arg-Xaa-Arg and -Lys/Arg-Xaa-Xaa-Arg C-degrons, such as SIL1 or OR51B2, leading to their ubiquitination and degradation. The CRL2(FEM1C) complex mediates ubiquitination and degradation of truncated MSRB1/SEPX1 selenoproteins produced by failed UGA/Sec decoding. Promotes ubiquitination and degradation of SLBP. This chain is Protein fem-1 homolog C, found in Mus musculus (Mouse).